The sequence spans 82 residues: Protein Rv1078A (82 aa).

Basic residues predominate over residues 35–54 (GGPTRRLRRRPAVTRRRRPD). The interval 35–82 (GGPTRRLRRRPAVTRRRRPDRRFVRCRPSPTRRGLPGCWRHSSTGPHT) is disordered.

Its subcellular location is the cytoplasm. This chain is Protein Rv1078A, found in Mycobacterium tuberculosis (strain ATCC 25618 / H37Rv).